Consider the following 164-residue polypeptide: Putative F-box protein At1g59675 (164 aa).

The F-box domain occupies S9–T56.

This Arabidopsis thaliana (Mouse-ear cress) protein is Putative F-box protein At1g59675.